Reading from the N-terminus, the 420-residue chain is MMQKFRIQGGGPLSGEVSISGAKNAALPILFASLLAEKPVEIANVPKLRDIDTTMELLGRLGVNITRNGSVFIDASGVNEFCAPYDLVKTMRASIWALGPLVARFGQGQVSLPGGCAIGARPVDLHIHGLEQLGATITLEEGYVKASVDGRLKGAHIVMDKVSVGATVTIMSAATLAEGTTVIENAAREPEIVDTADFLNAIGAKVTGAGTDTITIEGVERLGGGYHEVVADRIETGTFLVAAAVSGGKILCRNTRPALLEAVLAKLEEAGAAIETGDDWISIDMTDRELKAVNIRTAPHPGFPTDMQAQFSLLNLVAKGTGIITETIFENRFMHIPELIRMGARAEIEGNTVICGDTDGGLSGAQVMATDLRASASLVIAGSIAEGETIVDRIYHIDRGYEYIEGKFSALGMNIERISE.

23–24 (KN) contacts phosphoenolpyruvate. Position 92 (R92) interacts with UDP-N-acetyl-alpha-D-glucosamine. Residue C116 is the Proton donor of the active site. The residue at position 116 (C116) is a 2-(S-cysteinyl)pyruvic acid O-phosphothioketal. UDP-N-acetyl-alpha-D-glucosamine is bound by residues 121–125 (RPVDL), 161–164 (KVSV), D306, and I328.

The protein belongs to the EPSP synthase family. MurA subfamily.

It is found in the cytoplasm. The enzyme catalyses phosphoenolpyruvate + UDP-N-acetyl-alpha-D-glucosamine = UDP-N-acetyl-3-O-(1-carboxyvinyl)-alpha-D-glucosamine + phosphate. It participates in cell wall biogenesis; peptidoglycan biosynthesis. Its function is as follows. Cell wall formation. Adds enolpyruvyl to UDP-N-acetylglucosamine. The protein is UDP-N-acetylglucosamine 1-carboxyvinyltransferase of Photobacterium profundum (strain SS9).